Here is a 407-residue protein sequence, read N- to C-terminus: Arrestin domain-containing protein 2 (407 aa).

Belongs to the arrestin family. In terms of assembly, interacts with WWP1 (via WW domains).

This Mus musculus (Mouse) protein is Arrestin domain-containing protein 2 (Arrdc2).